The chain runs to 271 residues: MVEIHPTAIVSNKAKLGTNVKVGPFSIIEDEVEIGDNTVIHSSVKIRNYTKIGSNCEIFEGCVIGNIPQHLGFKGEISYVEIGNNTVLREYCTVHRGTSFDDGITRIGNNTYLMAYVHIAHDCKVGDNTILANCVTLAGHVKIGNYVFVGGLTPIHQFCRIGDYAMVGGASAVDKDIPPFTRASKNHVLLYGLNLVGLKRRGFSSETIKLLKEAYRILFRTSPTLAEGIKEVEEKLPKTKEIQMLLDFVKTTKRGIAPEASKRKLLISDEE.

It belongs to the transferase hexapeptide repeat family. LpxA subfamily. As to quaternary structure, homotrimer.

The protein localises to the cytoplasm. It catalyses the reaction a (3R)-hydroxyacyl-[ACP] + UDP-N-acetyl-alpha-D-glucosamine = a UDP-3-O-[(3R)-3-hydroxyacyl]-N-acetyl-alpha-D-glucosamine + holo-[ACP]. It functions in the pathway glycolipid biosynthesis; lipid IV(A) biosynthesis; lipid IV(A) from (3R)-3-hydroxytetradecanoyl-[acyl-carrier-protein] and UDP-N-acetyl-alpha-D-glucosamine: step 1/6. Its function is as follows. Involved in the biosynthesis of lipid A, a phosphorylated glycolipid that anchors the lipopolysaccharide to the outer membrane of the cell. The polypeptide is Acyl-[acyl-carrier-protein]--UDP-N-acetylglucosamine O-acyltransferase (Sulfurihydrogenibium sp. (strain YO3AOP1)).